The following is a 151-amino-acid chain: Large ribosomal subunit protein bL9 (151 aa).

Belongs to the bacterial ribosomal protein bL9 family.

In terms of biological role, binds to the 23S rRNA. This Mycoplasmopsis agalactiae (strain NCTC 10123 / CIP 59.7 / PG2) (Mycoplasma agalactiae) protein is Large ribosomal subunit protein bL9.